A 428-amino-acid polypeptide reads, in one-letter code: Enolase (428 aa).

Residue Q163 coordinates (2R)-2-phosphoglycerate. E205 (proton donor) is an active-site residue. D242, E285, and D312 together coordinate Mg(2+). The (2R)-2-phosphoglycerate site is built by K337, R366, S367, and K388. K337 functions as the Proton acceptor in the catalytic mechanism.

It belongs to the enolase family. Requires Mg(2+) as cofactor.

Its subcellular location is the cytoplasm. The protein localises to the secreted. It localises to the cell surface. It carries out the reaction (2R)-2-phosphoglycerate = phosphoenolpyruvate + H2O. It functions in the pathway carbohydrate degradation; glycolysis; pyruvate from D-glyceraldehyde 3-phosphate: step 4/5. In terms of biological role, catalyzes the reversible conversion of 2-phosphoglycerate (2-PG) into phosphoenolpyruvate (PEP). It is essential for the degradation of carbohydrates via glycolysis. This is Enolase from Neisseria meningitidis serogroup C (strain 053442).